Reading from the N-terminus, the 134-residue chain is Small ribosomal subunit protein uS12 (134 aa).

Asp-89 carries the 3-methylthioaspartic acid modification. Residues 101-134 (TLDASGVNGRNQSRSKYGTKRPKPGQAAAGGKKK) are disordered. The segment covering 125–134 (GQAAAGGKKK) has biased composition (low complexity).

Belongs to the universal ribosomal protein uS12 family. Part of the 30S ribosomal subunit. Contacts proteins S8 and S17. May interact with IF1 in the 30S initiation complex.

In terms of biological role, with S4 and S5 plays an important role in translational accuracy. Its function is as follows. Interacts with and stabilizes bases of the 16S rRNA that are involved in tRNA selection in the A site and with the mRNA backbone. Located at the interface of the 30S and 50S subunits, it traverses the body of the 30S subunit contacting proteins on the other side and probably holding the rRNA structure together. The combined cluster of proteins S8, S12 and S17 appears to hold together the shoulder and platform of the 30S subunit. This Gemmatimonas aurantiaca (strain DSM 14586 / JCM 11422 / NBRC 100505 / T-27) protein is Small ribosomal subunit protein uS12.